The following is a 161-amino-acid chain: Allophycocyanin beta chain (161 aa).

Asn71 is subject to N4-methylasparagine. Residue Cys81 participates in (2R,3E)-phycocyanobilin binding.

Belongs to the phycobiliprotein family. As to quaternary structure, heterodimer of an alpha and a beta chain. Post-translationally, contains one covalently linked phycocyanobilin chromophore.

The protein resides in the cellular thylakoid membrane. Its function is as follows. Light-harvesting photosynthetic bile pigment-protein from the phycobiliprotein complex. Allophycocyanin has a maximum absorption at approximately 650 nanometers. In Mastigocladus laminosus (Fischerella sp.), this protein is Allophycocyanin beta chain (apcB).